The sequence spans 318 residues: Transcription factor zip-4 (318 aa).

Residues 1–13 (MYNYNYSRGNKSM) are compositionally biased toward polar residues. Disordered stretches follow at residues 1-20 (MYNY…PRFH), 147-205 (EKKP…TAAA), 238-257 (NNDA…LQKD), and 273-318 (ELQS…KSNY). Acidic residues predominate over residues 173-190 (DYQEEGETSLSDNDESVD). One can recognise a bZIP domain in the interval 228–291 (EPIYKLKRAR…ERDQQLIKQL (64 aa)). The segment at 232–266 (KLKRARNNDAVRKSRNKAKELQLQKDEEYDEMKKR) is basic motif. The stretch at 242 to 280 (VRKSRNKAKELQLQKDEEYDEMKKRITQLEAELQSEREG) forms a coiled coil. Residues 267–274 (ITQLEAEL) are leucine-zipper. A compositionally biased stretch (basic and acidic residues) spans 275-298 (QSEREGRERDQQLIKQLIREKEST). Residues 307 to 318 (RNALESFNKSNY) show a composition bias toward polar residues.

It belongs to the bZIP family. C/EBP subfamily.

The protein localises to the nucleus. Transcription factor that binds to the promoter and the enhancer regions of target genes. Involved in responding to mitochondrial damage. Has a protective role in response to infection by the Gram-negative bacterium P.aeruginosa. This chain is Transcription factor zip-4, found in Caenorhabditis elegans.